The sequence spans 253 residues: MHIDVIGHGPALVLLHGWALHGGVFAPLVERLAPHYQLHLVDLPGHGFSRDDSTPLALPYVVAEIAAATPPAVWLGWSLGGLFALHAAATLPQVRGLAMIAATPRFVRGSDWPSAVQREVFVQFGVELSRDYRGTLERFLALDTLGSAHARSELRSLRETLTARGEPAPEALQQGLTLLERTDLRRTVPQLARPSLWIAGQRDRLVPAAGMHAAAALSPHAQALTIAGGGHAPFLGHADQVSEALQRFVASVP.

Substrate is bound by residues tryptophan 18, 78–79 (SL), and 139–143 (FLALD). Residue serine 78 is the Nucleophile of the active site. Residues aspartate 203 and histidine 231 contribute to the active site. Residue histidine 231 coordinates substrate.

Belongs to the AB hydrolase superfamily. Carboxylesterase BioH family. In terms of assembly, monomer.

It localises to the cytoplasm. It carries out the reaction 6-carboxyhexanoyl-[ACP] methyl ester + H2O = 6-carboxyhexanoyl-[ACP] + methanol + H(+). It functions in the pathway cofactor biosynthesis; biotin biosynthesis. In terms of biological role, the physiological role of BioH is to remove the methyl group introduced by BioC when the pimeloyl moiety is complete. It allows to synthesize pimeloyl-ACP via the fatty acid synthetic pathway through the hydrolysis of the ester bonds of pimeloyl-ACP esters. The sequence is that of Pimeloyl-[acyl-carrier protein] methyl ester esterase from Xanthomonas axonopodis pv. citri (strain 306).